A 792-amino-acid polypeptide reads, in one-letter code: Phosphoenolpyruvate synthase (792 aa).

Catalysis depends on His-421, which acts as the Tele-phosphohistidine intermediate. Substrate-binding residues include Arg-511, Arg-578, Glu-680, Gly-701, Ser-702, Asn-703, and Asp-704. Residue Glu-680 coordinates Mg(2+). Asp-704 contributes to the Mg(2+) binding site. The Proton donor role is filled by Cys-751.

It belongs to the PEP-utilizing enzyme family. Homodimer. It depends on Mg(2+) as a cofactor.

It carries out the reaction pyruvate + ATP + H2O = phosphoenolpyruvate + AMP + phosphate + 2 H(+). It functions in the pathway carbohydrate biosynthesis; gluconeogenesis. With respect to regulation, activated by a Pi-dependent pyrophosphorylation and inactivated by an ADP-dependent phosphorylation on a regulatory threonine. Both reactions are mediated by the bifunctional serine/threonine kinase and phosphorylase PpsR. Its function is as follows. Catalyzes the phosphorylation of pyruvate to phosphoenolpyruvate. This Escherichia coli (strain K12) protein is Phosphoenolpyruvate synthase (ppsA).